Consider the following 115-residue polypeptide: Large ribosomal subunit protein bL19 (115 aa).

This sequence belongs to the bacterial ribosomal protein bL19 family.

Functionally, this protein is located at the 30S-50S ribosomal subunit interface and may play a role in the structure and function of the aminoacyl-tRNA binding site. The protein is Large ribosomal subunit protein bL19 of Leifsonia xyli subsp. xyli (strain CTCB07).